A 765-amino-acid chain; its full sequence is Phosphoribosylformylglycinamidine synthase subunit PurL (765 aa).

Positions 1–13 (MTVSPTSAPTQAI) are enriched in polar residues. The disordered stretch occupies residues 1 to 32 (MTVSPTSAPTQAIDTVERAATTPDEPQPFGEL). The active site involves His65. Positions 68 and 112 each coordinate ATP. Glu114 is a Mg(2+) binding site. Residues 115 to 118 (SHNH) and Arg137 contribute to the substrate site. The active-site Proton acceptor is His116. Residue Asp138 coordinates Mg(2+). Substrate is bound at residue Gln263. Asp291 lines the Mg(2+) pocket. Position 335-337 (335-337 (ESQ)) interacts with substrate. Positions 523 and 560 each coordinate ATP. Asn561 is a binding site for Mg(2+). Ser563 serves as a coordination point for substrate.

The protein belongs to the FGAMS family. As to quaternary structure, monomer. Part of the FGAM synthase complex composed of 1 PurL, 1 PurQ and 2 PurS subunits.

The protein localises to the cytoplasm. The catalysed reaction is N(2)-formyl-N(1)-(5-phospho-beta-D-ribosyl)glycinamide + L-glutamine + ATP + H2O = 2-formamido-N(1)-(5-O-phospho-beta-D-ribosyl)acetamidine + L-glutamate + ADP + phosphate + H(+). The protein operates within purine metabolism; IMP biosynthesis via de novo pathway; 5-amino-1-(5-phospho-D-ribosyl)imidazole from N(2)-formyl-N(1)-(5-phospho-D-ribosyl)glycinamide: step 1/2. Part of the phosphoribosylformylglycinamidine synthase complex involved in the purines biosynthetic pathway. Catalyzes the ATP-dependent conversion of formylglycinamide ribonucleotide (FGAR) and glutamine to yield formylglycinamidine ribonucleotide (FGAM) and glutamate. The FGAM synthase complex is composed of three subunits. PurQ produces an ammonia molecule by converting glutamine to glutamate. PurL transfers the ammonia molecule to FGAR to form FGAM in an ATP-dependent manner. PurS interacts with PurQ and PurL and is thought to assist in the transfer of the ammonia molecule from PurQ to PurL. This Mycobacterium avium (strain 104) protein is Phosphoribosylformylglycinamidine synthase subunit PurL.